Consider the following 509-residue polypeptide: Probable cation transporter HKT2;3 (509 aa).

At 1–32 (MPIRLHIFVNSARHAINSSAFICRFIAYHLSP) the chain is on the cytoplasmic side. Helical transmembrane passes span 33–53 (LLIHLSYFLIIDILGFVSLVV) and 96–116 (ILTLLMFLDSKMFLSFLGLVL). Residues 117–164 (ESSKQNKHDPENRRVSSVTVCKQSQLEEATPQTPSMNSIDIKKRCLKY) are Cytoplasmic-facing. 2 helical membrane passes run 165-185 (LVFVVLAYMIIILVTGSLLVF) and 237-257 (GLLLLLIGQILAGSTLFPVFL). At 258 to 296 (RLVIWALRGLRLAKAEEPDFMMNNSSAVGFSHLLPNLQT) the chain is on the cytoplasmic side. Helical transmembrane passes span 297–317 (IFLAVVEVAFVAMTVILFCCL) and 353–373 (CSLVAPAALVLFMVMMYTPSL). Residues 374 to 400 (TKLFSACQDHKRIGPESDDRTSKGKPF) lie on the Cytoplasmic side of the membrane. 2 helical membrane passes run 401–421 (LKMMAFSPLGFNTTVIMLVCI) and 474–494 (AYNFSGWWSEPGKLILVLAML). The Cytoplasmic segment spans residues 495–509 (CGRLNSKDSTSARTR).

It belongs to the TrkH potassium transport family. HKT (TC 2.A.38.3) subfamily.

It is found in the membrane. Functionally, probable cation transporter. May be involved in regulation of potassium-sodium homeostasis. The chain is Probable cation transporter HKT2;3 from Oryza sativa subsp. japonica (Rice).